A 308-amino-acid polypeptide reads, in one-letter code: Glycine betaine uptake system ATP-binding protein YehX (308 aa).

Residues 2-235 (IEFSHVSKLF…PANDFVRQFF (234 aa)) form the ABC transporter domain. ATP is bound at residue 34 to 41 (GTSGSGKS).

Belongs to the ABC transporter superfamily. The complex is composed of two ATP-binding proteins (YehX), two transmembrane proteins (YehW and YehY) and a solute-binding protein (YehZ).

It catalyses the reaction glycine betaine(out) + ATP + H2O = glycine betaine(in) + ADP + phosphate + H(+). Functionally, part of an ABC transporter complex involved in low-affinity glycine betaine uptake. Probably responsible for energy coupling to the transport system. This is Glycine betaine uptake system ATP-binding protein YehX (yehX) from Escherichia coli (strain K12).